The following is a 348-amino-acid chain: Serpentine receptor class beta-7 (348 aa).

7 helical membrane-spanning segments follow: residues 31–51 (QLIMLFSSLFPLTYFILFQLL), 63–83 (LVGYFGAILVFSVVFLVEAFI), 107–127 (GNLLGCLLMTIPTFFPISITF), 145–165 (FLGPILAIFLVLLDLFLILLI), 191–211 (MFFIMMLILNSFNFFFSFLLL), 241–261 (ISVIFVHVTFFGSYTTITILL), and 280–300 (GAFMTMISSYNFAVGVASVYF).

The protein belongs to the nematode receptor-like protein srb family.

The protein resides in the membrane. The chain is Serpentine receptor class beta-7 (srb-7) from Caenorhabditis elegans.